A 586-amino-acid chain; its full sequence is Arginine--tRNA ligase (586 aa).

The 'HIGH' region motif lies at alanine 130–histidine 140.

The protein belongs to the class-I aminoacyl-tRNA synthetase family. In terms of assembly, monomer.

The protein resides in the cytoplasm. The enzyme catalyses tRNA(Arg) + L-arginine + ATP = L-arginyl-tRNA(Arg) + AMP + diphosphate. In Methylobacterium sp. (strain 4-46), this protein is Arginine--tRNA ligase.